The primary structure comprises 302 residues: L-glutamate/L-aspartate-binding protein (302 aa).

A signal peptide spans 1-23; that stretch reads MRIAPSLLSTAIVAALLSAPVVA.

Belongs to the bacterial solute-binding protein 3 family.

It localises to the periplasm. In terms of biological role, binds L-glutamate and L-aspartate. The sequence is that of L-glutamate/L-aspartate-binding protein from Pseudomonas aeruginosa (strain ATCC 15692 / DSM 22644 / CIP 104116 / JCM 14847 / LMG 12228 / 1C / PRS 101 / PAO1).